The chain runs to 203 residues: Ras-related protein Rab-7a (203 aa).

GTP-binding positions include 15–22 (GDSGVGKT), 34–40 (SNQYKAT), 63–67 (DTAGQ), 125–128 (NKID), and 157–158 (AK). An Effector region motif is present at residues 37-45 (YKATIGADF). S-geranylgeranyl cysteine attachment occurs at residues C202 and C203.

This sequence belongs to the small GTPase superfamily. Rab family.

It is found in the late endosome membrane. The protein resides in the lysosome membrane. Its subcellular location is the cytoplasmic vesicle. The protein localises to the autophagosome membrane. It localises to the lipid droplet. It catalyses the reaction GTP + H2O = GDP + phosphate + H(+). Its function is as follows. Small GTPase which cycles between active GTP-bound and inactive GDP-bound states. In its active state, binds to a variety of effector proteins playing a key role in the regulation of endo-lysosomal trafficking. Governs early-to-late endosomal maturation, microtubule minus-end as well as plus-end directed endosomal migration and positioning, and endosome-lysosome transport through different protein-protein interaction cascades. Involved in lipophagy, a cytosolic lipase-independent autophagic pathway. This Dictyostelium discoideum (Social amoeba) protein is Ras-related protein Rab-7a (rab7A).